Consider the following 314-residue polypeptide: tRNA dimethylallyltransferase (314 aa).

6 to 13 (GPTAVGKT) lines the ATP pocket. 8-13 (TAVGKT) lines the substrate pocket. Residues 31–34 (DSRQ) form an interaction with substrate tRNA region.

The protein belongs to the IPP transferase family. In terms of assembly, monomer. The cofactor is Mg(2+).

It catalyses the reaction adenosine(37) in tRNA + dimethylallyl diphosphate = N(6)-dimethylallyladenosine(37) in tRNA + diphosphate. Catalyzes the transfer of a dimethylallyl group onto the adenine at position 37 in tRNAs that read codons beginning with uridine, leading to the formation of N6-(dimethylallyl)adenosine (i(6)A). The polypeptide is tRNA dimethylallyltransferase (Pseudothermotoga lettingae (strain ATCC BAA-301 / DSM 14385 / NBRC 107922 / TMO) (Thermotoga lettingae)).